The sequence spans 545 residues: Inosine-5'-monophosphate dehydrogenase (545 aa).

2 CBS domains span residues 138 to 194 (MITD…DYDT) and 201 to 258 (MTKE…PDAT). Residues D295 and 347–349 (GIG) contribute to the NAD(+) site. K(+) contacts are provided by G349 and G351. An IMP-binding site is contributed by S352. Position 354 (C354) interacts with K(+). C354 acts as the Thioimidate intermediate in catalysis. IMP is bound by residues 387-389 (DGG), 410-411 (GG), and 434-438 (YRGMG). The active-site Proton acceptor is the R455. An IMP-binding site is contributed by E470. K(+) contacts are provided by E524, S525, and H526.

This sequence belongs to the IMPDH/GMPR family. As to quaternary structure, homotetramer. It depends on K(+) as a cofactor.

It catalyses the reaction IMP + NAD(+) + H2O = XMP + NADH + H(+). It functions in the pathway purine metabolism; XMP biosynthesis via de novo pathway; XMP from IMP: step 1/1. Mycophenolic acid (MPA) is a non-competitive inhibitor that prevents formation of the closed enzyme conformation by binding to the same site as the amobile flap. In contrast, mizoribine monophosphate (MZP) is a competitive inhibitor that induces the closed conformation. MPA is a potent inhibitor of mammalian IMPDHs but a poor inhibitor of the bacterial enzymes. MZP is a more potent inhibitor of bacterial IMPDH. In terms of biological role, catalyzes the conversion of inosine 5'-phosphate (IMP) to xanthosine 5'-phosphate (XMP), the first committed and rate-limiting step in the de novo synthesis of guanine nucleotides, and therefore plays an important role in the regulation of cell growth. In Bifidobacterium longum (strain NCC 2705), this protein is Inosine-5'-monophosphate dehydrogenase.